A 447-amino-acid polypeptide reads, in one-letter code: Tubulin beta chain (447 aa).

GTP contacts are provided by Gln11, Glu69, Ser138, Gly142, Thr143, Gly144, Asn204, and Asn226. Mg(2+) is bound at residue Glu69. Residues 424-447 (QYQDAGVDEEEEEYEEEAPLEGEE) form a disordered region. Residues 429 to 447 (GVDEEEEEYEEEAPLEGEE) show a composition bias toward acidic residues.

This sequence belongs to the tubulin family. In terms of assembly, dimer of alpha and beta chains. A typical microtubule is a hollow water-filled tube with an outer diameter of 25 nm and an inner diameter of 15 nM. Alpha-beta heterodimers associate head-to-tail to form protofilaments running lengthwise along the microtubule wall with the beta-tubulin subunit facing the microtubule plus end conferring a structural polarity. Microtubules usually have 13 protofilaments but different protofilament numbers can be found in some organisms and specialized cells. The cofactor is Mg(2+).

The protein localises to the cytoplasm. It localises to the cytoskeleton. Tubulin is the major constituent of microtubules, a cylinder consisting of laterally associated linear protofilaments composed of alpha- and beta-tubulin heterodimers. Microtubules grow by the addition of GTP-tubulin dimers to the microtubule end, where a stabilizing cap forms. Below the cap, tubulin dimers are in GDP-bound state, owing to GTPase activity of alpha-tubulin. The sequence is that of Tubulin beta chain (tub-2) from Neurospora crassa (strain ATCC 24698 / 74-OR23-1A / CBS 708.71 / DSM 1257 / FGSC 987).